The sequence spans 491 residues: Proline--tRNA ligase (491 aa).

This sequence belongs to the class-II aminoacyl-tRNA synthetase family. ProS type 3 subfamily. Homodimer.

The protein resides in the cytoplasm. It carries out the reaction tRNA(Pro) + L-proline + ATP = L-prolyl-tRNA(Pro) + AMP + diphosphate. Its function is as follows. Catalyzes the attachment of proline to tRNA(Pro) in a two-step reaction: proline is first activated by ATP to form Pro-AMP and then transferred to the acceptor end of tRNA(Pro). The polypeptide is Proline--tRNA ligase (Amoebophilus asiaticus (strain 5a2)).